Here is a 148-residue protein sequence, read N- to C-terminus: Lysozyme C, milk isozyme (148 aa).

Positions 1–18 (MKALLIVGLLLLSVAVQG) are cleaved as a signal peptide. The 130-residue stretch at 19–148 (KKFQRCELAR…LRSYVQGCRV (130 aa)) folds into the C-type lysozyme domain. Cystine bridges form between cysteine 24/cysteine 146, cysteine 48/cysteine 134, cysteine 83/cysteine 99, and cysteine 95/cysteine 113. Residues glutamate 53 and aspartate 71 contribute to the active site.

This sequence belongs to the glycosyl hydrolase 22 family.

It carries out the reaction Hydrolysis of (1-&gt;4)-beta-linkages between N-acetylmuramic acid and N-acetyl-D-glucosamine residues in a peptidoglycan and between N-acetyl-D-glucosamine residues in chitodextrins.. In terms of biological role, lysozymes have primarily a bacteriolytic function; those in tissues and body fluids are associated with the monocyte-macrophage system and enhance the activity of immunoagents. This is Lysozyme C, milk isozyme from Bos taurus (Bovine).